The sequence spans 327 residues: Aldo/keto reductase slr0942 (327 aa).

18-27 (GEQIPALGLG) contacts NADP(+). Tyr57 acts as the Proton donor in catalysis. Position 119 (His119) interacts with substrate. Residue 216 to 280 (SPLGSGDRPA…SVNPERLEQN (65 aa)) participates in NADP(+) binding.

It belongs to the aldo/keto reductase family. As to quaternary structure, monomer.

The catalysed reaction is a secondary alcohol + NADP(+) = a ketone + NADPH + H(+). Its activity is regulated as follows. Curcumin non-competitively inhibits the enzyme with respect to furfural. To a lesser extent, enzyme activity is also inhibited by indomethacin, coumarate, coumarin, and alrestatin. Functionally, aldo/keto reductase with broad substrate spectrum. Catalyzes the NADPH-dependent reduction of aldehyde- and ketone-groups of different classes of carbonyl compounds to the corresponding alcohols. Highest enzymatic efficiency is observed with 4-oxonon-2-enal (4-ONE) and 4-hydroxynon-2-enal (4-HNE), that are lipid peroxidation products, and 9,10-phenanthrenequinone (9,10-PQ), a photoproduct of phenanthrene that is one of the most prevalent polycyclic aromatic hydrocarbons in the environment. Is also active on sugar-derived reactive carbonyls such as methylglyoxal (MG), glyoxal and 3-deoxyglucosone (3-DG), and on other lipid-derived carbonyls such as acrolein. May be involved in the detoxification of the toxic lipid peroxidation products 4-ONE and 4-HNE besides many other exo- and endogenic reactive carbonyl compounds (RCs) that may lead to photoinhibition or other cell damages. This is Aldo/keto reductase slr0942 from Synechocystis sp. (strain ATCC 27184 / PCC 6803 / Kazusa).